Consider the following 416-residue polypeptide: Lipid III flippase (416 aa).

Residues 1 to 17 are Cytoplasmic-facing; that stretch reads MSLAKASLWTAASTLVK. The helical transmembrane segment at 18–38 threads the bilayer; that stretch reads IGAGLLVGKLLAVSFGPAGLG. Residues 39 to 45 lie on the Periplasmic side of the membrane; that stretch reads LAANFRQ. A helical membrane pass occupies residues 46–66; the sequence is LITVLGVLAGAGIFNGVTKYV. Residues 67–84 are Cytoplasmic-facing; sequence AQYHDNPQQLRRVVGTSS. The chain crosses the membrane as a helical span at residues 85–105; sequence AMVLGFSTLMALVFVLAAAPI. The Periplasmic segment spans residues 106 to 121; it reads SQGLFGNTDYQGLVRL. The chain crosses the membrane as a helical span at residues 122 to 142; sequence VALVQMGIAWGNLLLALMKGF. The Cytoplasmic portion of the chain corresponds to 143–144; it reads RD. The chain crosses the membrane as a helical span at residues 145-165; it reads AAGNALSLIVGSLIGVLAYYV. The Periplasmic portion of the chain corresponds to 166–174; the sequence is SYRLGGYEG. The chain crosses the membrane as a helical span at residues 175 to 195; it reads ALLGLALIPALVVIPAAIMLI. Residues 196-216 are Cytoplasmic-facing; that stretch reads KRGVIPLSYLKPSWDNGLAGQ. The helical transmembrane segment at 217–237 threads the bilayer; that stretch reads LSKFTLMALITSVTLPVAYIM. The Periplasmic portion of the chain corresponds to 238–259; sequence MRKLLAAQYSWDEVGIWQGVSS. The chain crosses the membrane as a helical span at residues 260-280; it reads ISDAYLQFITASFSVYLLPTL. Residues 281–302 are Cytoplasmic-facing; it reads SRLTEKRDITREVVKSLKFVLP. A helical membrane pass occupies residues 303 to 323; that stretch reads AVAAASFTVWLLRDFAIWLLL. Topologically, residues 324 to 334 are periplasmic; that stretch reads SNKFTAMRDLF. The chain crosses the membrane as a helical span at residues 335-355; that stretch reads AWQLVGDVLKVGAYVFGYLVI. The Cytoplasmic segment spans residues 356-370; it reads AKASLRFYILAEVSQ. A run of 2 helical transmembrane segments spans residues 371-391 and 392-412; these read FTLL…LGAA and QAYM…FLLW. At 413 to 416 the chain is on the cytoplasmic side; that stretch reads RRRA.

This sequence belongs to the polysaccharide transport (PST) (TC 2.A.66.2) family. Probably part of a complex composed of WzxE, WzyE and WzzE.

Its subcellular location is the cell inner membrane. It functions in the pathway bacterial outer membrane biogenesis; enterobacterial common antigen biosynthesis. Its function is as follows. Mediates the transbilayer movement of Und-PP-GlcNAc-ManNAcA-Fuc4NAc (lipid III) from the inner to the outer leaflet of the cytoplasmic membrane during the assembly of enterobacterial common antigen (ECA). Required for the assembly of the phosphoglyceride-linked form of ECA (ECA(PG)) and the water-soluble cyclic form of ECA (ECA(CYC)). Could also mediate the translocation of Und-PP-GlcNAc. This is Lipid III flippase from Escherichia coli (strain K12).